The following is a 396-amino-acid chain: Glutamyl-tRNA reductase (396 aa).

Residues 45–48, serine 101, 106–108, and glutamine 112 each bind substrate; these read TCNR and EDQ. Residue cysteine 46 is the Nucleophile of the active site. 177 to 182 contributes to the NADP(+) binding site; the sequence is GFGDVG.

Belongs to the glutamyl-tRNA reductase family. In terms of assembly, homodimer.

It catalyses the reaction (S)-4-amino-5-oxopentanoate + tRNA(Glu) + NADP(+) = L-glutamyl-tRNA(Glu) + NADPH + H(+). It participates in porphyrin-containing compound metabolism; protoporphyrin-IX biosynthesis; 5-aminolevulinate from L-glutamyl-tRNA(Glu): step 1/2. Catalyzes the NADPH-dependent reduction of glutamyl-tRNA(Glu) to glutamate 1-semialdehyde (GSA). The chain is Glutamyl-tRNA reductase from Clostridium acetobutylicum (strain ATCC 824 / DSM 792 / JCM 1419 / IAM 19013 / LMG 5710 / NBRC 13948 / NRRL B-527 / VKM B-1787 / 2291 / W).